Reading from the N-terminus, the 406-residue chain is MAAAAARPLVTIQTLDGDMSTDQSSTVVLPDVMTAPVRPDIVNFVHAQISNNSRQPYAVSKKAGHQTSAESWGTGRAVSRIPRVPGGGTHRAGQAAFGNMCRGGRMFAPTKIWRRWHRRVNVNMKRHAIVSAIAATAVPALVMARGHKIENVPEMPLVVSDSAEAVEKTSAAIKVLKQIGAYDDAEKAKNSIGIRPGKGKMRNRRYISRKGPLVVYGTEGSKIVKAFRNLPGVELCHVERLNLLKLAPGGHLGRFVIWTKSAFEKLESIYGSFEKPSEKKKGYVLPRAKMVNADLARIINSDEIQSVVNPIKKDAKRAVLKKNPLKNLNVMLKLNPYAKTAKRMSLLAEAQRVKAKKEKLAKKRKTVTKEEALAIKAAGKSWYKTMISDSDYTEFDNFTKWLGASQ.

The tract at residues Pro-56–Ala-95 is disordered.

This sequence belongs to the universal ribosomal protein uL4 family.

The chain is Large ribosomal subunit protein uL4z (RPL4A) from Arabidopsis thaliana (Mouse-ear cress).